The sequence spans 105 residues: ATP-dependent Clp protease adapter protein ClpS (105 aa).

This sequence belongs to the ClpS family. Binds to the N-terminal domain of the chaperone ClpA.

Involved in the modulation of the specificity of the ClpAP-mediated ATP-dependent protein degradation. The chain is ATP-dependent Clp protease adapter protein ClpS from Aeromonas hydrophila subsp. hydrophila (strain ATCC 7966 / DSM 30187 / BCRC 13018 / CCUG 14551 / JCM 1027 / KCTC 2358 / NCIMB 9240 / NCTC 8049).